The primary structure comprises 346 residues: Ferredoxin--NADP reductase (346 aa).

7 residues coordinate FAD: Glu35, Gln43, Tyr48, Val88, Phe122, Asp287, and Thr327.

Belongs to the ferredoxin--NADP reductase type 2 family. Homodimer. Requires FAD as cofactor.

The enzyme catalyses 2 reduced [2Fe-2S]-[ferredoxin] + NADP(+) + H(+) = 2 oxidized [2Fe-2S]-[ferredoxin] + NADPH. This chain is Ferredoxin--NADP reductase, found in Oenococcus oeni (strain ATCC BAA-331 / PSU-1).